The primary structure comprises 626 residues: Basic helix-loop-helix ARNT-like protein 1 (626 aa).

The disordered stretch occupies residues 1–60 (MADQRMDISSTISDFMSPGATDLLSSPLGTSGMDCNRKRKGSSTDYQESMDTDKDDPHGR). Ser-17 is modified (phosphoserine; by GSK3-beta). A Phosphothreonine; by GSK3-beta modification is found at Thr-21. A Nuclear localization signal motif is present at residues 36-41 (NRKRKG). A compositionally biased stretch (basic and acidic residues) spans 51–60 (DTDKDDPHGR). Residues 72–125 (NAREAHSQIEKRRRDKMNSFIDELASLVPTCNAMSRKLDKLTVLRMAVQHMKTL) form the bHLH domain. Ser-78 is modified (phosphoserine). Ser-90 is subject to Phosphoserine; by CK2. The Nuclear export signal 1 signature appears at 142-152 (LSDDELKHLIL). Positions 143 to 215 (SDDELKHLIL…EQLSSSDTAP (73 aa)) constitute a PAS 1 domain. Residue Lys-252 forms a Glycyl lysine isopeptide (Lys-Gly) (interchain with G-Cter in SUMO2 and SUMO3) linkage. A Glycyl lysine isopeptide (Lys-Gly) (interchain with G-Cter in SUMO); alternate cross-link involves residue Lys-259. Residue Lys-259 forms a Glycyl lysine isopeptide (Lys-Gly) (interchain with G-Cter in SUMO2); alternate linkage. Positions 326 to 396 (PQPVNGEIRV…ECHRQVLQTR (71 aa)) constitute a PAS 2 domain. A Nuclear export signal 2 motif is present at residues 361–369 (LAYLPQELL). The 44-residue stretch at 401 to 444 (TNCYKFKIKDGSFITLRSRWFSFMNPWTKEVEYIVSTNTVVLAN) folds into the PAC domain. 2 disordered regions span residues 457–493 (TASPHSMDSMLPSGEGGPKRTHPTVPGIPGGTRAGAG) and 510–597 (RGSS…SNDE). Residues 484-493 (IPGGTRAGAG) are compositionally biased toward gly residues. The interaction with CIART stretch occupies residues 508–588 (RIRGSSPSSC…IGIDMIDNDQ (81 aa)). Over residues 511–521 (GSSPSSCGSSP) the composition is skewed to low complexity. Lys-538 carries the N6-acetyllysine modification.

As to quaternary structure, component of the circadian clock oscillator which includes the CRY1/2 proteins, CLOCK or NPAS2, BMAL1 or BMAL2, CSNK1D and/or CSNK1E, TIMELESS and the PER1/2/3 proteins. Forms a heterodimer with CLOCK. The CLOCK-BMAL1 heterodimer is required for E-box-dependent transactivation, for CLOCK nuclear translocation and degradation, and, for phosphorylation of both CLOCK and BMAL1. Part of a nuclear complex which also includes RACK1 and PRKCA; RACK1 and PRKCA are recruited to the complex in a circadian manner. Interacts with NPAS2. Interacts with EZH2. Interacts with SUMO3. Interacts with SIRT1. Interacts with AHR. Interacts with ID1, ID2 and ID3. Interacts with DDX4. Interacts with OGT. Interacts with EED and SUZ12. Interacts with MTA1. Interacts with CIART. Interacts with HSP90. Interacts with KAT2B and EP300. Interacts with BHLHE40/DEC1 and BHLHE41/DEC2. Interacts with RELB and the interaction is enhanced in the presence of CLOCK. Interacts with PER1, PER2, CRY1 and CRY2 and this interaction requires a translocation to the nucleus. Interaction of the CLOCK-BMAL1 heterodimer with PER or CRY inhibits transcription activation. Interaction of the CLOCK-BMAL1 with CRY1 is independent of DNA but with PER2 is off DNA. The CLOCK-BMAL1 heterodimer interacts with GSK3B. Interacts with KDM5A. Interacts with KMT2A; in a circadian manner. Interacts with UBE3A. Interacts with PRKCG. Interacts with MAGEL2. Interacts with NCOA2. Interacts with THRAP3. The CLOCK-BMAL1 heterodimer interacts with PASD1. Interacts with PASD1. Interacts with USP9X. Interacts with PIWIL2 (via PIWI domain). Interacts with HDAC3. Interacts with HNF4A. Post-translationally, ubiquitinated, leading to its proteasomal degradation. Deubiquitinated by USP9X. O-glycosylated; contains O-GlcNAc. O-glycosylation by OGT prevents protein degradation by inhibiting ubiquitination. It also stabilizes the CLOCK-BMAL1 heterodimer thereby increasing CLOCK-BMAL1-mediated transcription of genes in the negative loop of the circadian clock such as PER1/2/3 and CRY1/2. In terms of processing, acetylated on Lys-538 by CLOCK during the repression phase of the circadian cycle. Acetylation facilitates recruitment of CRY1 protein and initiates the repression phase of the circadian cycle. Acetylated at Lys-538 by KAT5 during the activation phase of the cycle, leading to recruitment of the positive transcription elongation factor b (P-TEFb) and BRD4, followed by productive elongation of circadian transcripts. Deacetylated by SIRT1, which may result in decreased protein stability. Post-translationally, phosphorylated upon dimerization with CLOCK. Phosphorylation enhances the transcriptional activity, alters the subcellular localization and decreases the stability of the CLOCK-BMAL1 heterodimer by promoting its degradation. Phosphorylation shows circadian variations in the liver with a peak between CT10 to CT14. Phosphorylation at Ser-90 by CK2 is essential for its nuclear localization, its interaction with CLOCK and controls CLOCK nuclear entry. Dephosphorylation at Ser-78 is important for dimerization with CLOCK and transcriptional activity. Sumoylated on Lys-259 upon dimerization with CLOCK. Predominantly conjugated to poly-SUMO2/3 rather than SUMO1 and the level of these conjugates undergo rhythmic variation, peaking at CT9-CT12. Sumoylation localizes it exclusively to the PML body and promotes its ubiquitination in the PML body, ubiquitin-dependent proteasomal degradation and the transcriptional activity of the CLOCK-BMAL1 heterodimer. In terms of processing, undergoes lysosome-mediated degradation in a time-dependent manner in the liver.

The protein resides in the nucleus. It is found in the cytoplasm. The protein localises to the PML body. Functionally, transcriptional activator which forms a core component of the circadian clock. The circadian clock, an internal time-keeping system, regulates various physiological processes through the generation of approximately 24 hour circadian rhythms in gene expression, which are translated into rhythms in metabolism and behavior. It is derived from the Latin roots 'circa' (about) and 'diem' (day) and acts as an important regulator of a wide array of physiological functions including metabolism, sleep, body temperature, blood pressure, endocrine, immune, cardiovascular, and renal function. Consists of two major components: the central clock, residing in the suprachiasmatic nucleus (SCN) of the brain, and the peripheral clocks that are present in nearly every tissue and organ system. Both the central and peripheral clocks can be reset by environmental cues, also known as Zeitgebers (German for 'timegivers'). The predominant Zeitgeber for the central clock is light, which is sensed by retina and signals directly to the SCN. The central clock entrains the peripheral clocks through neuronal and hormonal signals, body temperature and feeding-related cues, aligning all clocks with the external light/dark cycle. Circadian rhythms allow an organism to achieve temporal homeostasis with its environment at the molecular level by regulating gene expression to create a peak of protein expression once every 24 hours to control when a particular physiological process is most active with respect to the solar day. Transcription and translation of core clock components (CLOCK, NPAS2, BMAL1, BMAL2, PER1, PER2, PER3, CRY1 and CRY2) plays a critical role in rhythm generation, whereas delays imposed by post-translational modifications (PTMs) are important for determining the period (tau) of the rhythms (tau refers to the period of a rhythm and is the length, in time, of one complete cycle). A diurnal rhythm is synchronized with the day/night cycle, while the ultradian and infradian rhythms have a period shorter and longer than 24 hours, respectively. Disruptions in the circadian rhythms contribute to the pathology of cardiovascular diseases, cancer, metabolic syndromes and aging. A transcription/translation feedback loop (TTFL) forms the core of the molecular circadian clock mechanism. Transcription factors, CLOCK or NPAS2 and BMAL1 or BMAL2, form the positive limb of the feedback loop, act in the form of a heterodimer and activate the transcription of core clock genes and clock-controlled genes (involved in key metabolic processes), harboring E-box elements (5'-CACGTG-3') within their promoters. The core clock genes: PER1/2/3 and CRY1/2 which are transcriptional repressors form the negative limb of the feedback loop and interact with the CLOCK|NPAS2-BMAL1|BMAL2 heterodimer inhibiting its activity and thereby negatively regulating their own expression. This heterodimer also activates nuclear receptors NR1D1, NR1D2, RORA, RORB and RORG, which form a second feedback loop and which activate and repress BMAL1 transcription, respectively. BMAL1 positively regulates myogenesis and negatively regulates adipogenesis via the transcriptional control of the genes of the canonical Wnt signaling pathway. Plays a role in normal pancreatic beta-cell function; regulates glucose-stimulated insulin secretion via the regulation of antioxidant genes NFE2L2/NRF2 and its targets SESN2, PRDX3, CCLC and CCLM. Negatively regulates the mTORC1 signaling pathway; regulates the expression of MTOR and DEPTOR. Controls diurnal oscillations of Ly6C inflammatory monocytes; rhythmic recruitment of the PRC2 complex imparts diurnal variation to chemokine expression that is necessary to sustain Ly6C monocyte rhythms. Regulates the expression of HSD3B2, STAR, PTGS2, CYP11A1, CYP19A1 and LHCGR in the ovary and also the genes involved in hair growth. Plays an important role in adult hippocampal neurogenesis by regulating the timely entry of neural stem/progenitor cells (NSPCs) into the cell cycle and the number of cell divisions that take place prior to cell-cycle exit. Regulates the circadian expression of CIART. The CLOCK-BMAL1 heterodimer regulates the circadian expression of SERPINE1/PAI1, VWF, B3, CCRN4L/NOC, NAMPT, DBP, MYOD1, PPARGC1A, PPARGC1B, SIRT1, GYS2, F7, NGFR, GNRHR, BHLHE40/DEC1, ATF4, MTA1 and also genes implicated in glucose and lipid metabolism. Promotes rhythmic chromatin opening, regulating the DNA accessibility of other transcription factors. The NPAS2-BMAL1 heterodimer positively regulates the expression of MAOA, F7 and LDHA and modulates the circadian rhythm of daytime contrast sensitivity by regulating the rhythmic expression of adenylate cyclase type 1 (ADCY1) in the retina. The preferred binding motif for the CLOCK-BMAL1 heterodimer is 5'-CACGTGA-3', which contains a flanking adenine nucleotide at the 3-prime end of the canonical 6-nucleotide E-box sequence. CLOCK specifically binds to the half-site 5'-CAC-3', while BMAL1 binds to the half-site 5'-GTGA-3'. The CLOCK-BMAL1 heterodimer also recognizes the non-canonical E-box motifs 5'-AACGTGA-3' and 5'-CATGTGA-3'. Essential for the rhythmic interaction of CLOCK with ASS1 and plays a critical role in positively regulating CLOCK-mediated acetylation of ASS1. Plays a role in protecting against lethal sepsis by limiting the expression of immune checkpoint protein CD274 in macrophages in a PKM2-dependent manner. Regulates the diurnal rhythms of skeletal muscle metabolism via transcriptional activation of genes promoting triglyceride synthesis (DGAT2) and metabolic efficiency (COQ10B). The protein is Basic helix-loop-helix ARNT-like protein 1 (BMAL1) of Equus caballus (Horse).